The following is a 415-amino-acid chain: Serine hydroxymethyltransferase (415 aa).

The segment covering 1-10 (MERSHIRDVD) has biased composition (basic and acidic residues). A disordered region spans residues 1-21 (MERSHIRDVDPDAADALSSER). Residues L119 and 123–125 (GHL) each bind (6S)-5,6,7,8-tetrahydrofolate. K228 bears the N6-(pyridoxal phosphate)lysine mark. (6S)-5,6,7,8-tetrahydrofolate is bound at residue 353 to 355 (SAF).

The protein belongs to the SHMT family. In terms of assembly, homodimer. Pyridoxal 5'-phosphate serves as cofactor.

Its subcellular location is the cytoplasm. It catalyses the reaction (6R)-5,10-methylene-5,6,7,8-tetrahydrofolate + glycine + H2O = (6S)-5,6,7,8-tetrahydrofolate + L-serine. It participates in one-carbon metabolism; tetrahydrofolate interconversion. It functions in the pathway amino-acid biosynthesis; glycine biosynthesis; glycine from L-serine: step 1/1. Its function is as follows. Catalyzes the reversible interconversion of serine and glycine with tetrahydrofolate (THF) serving as the one-carbon carrier. Also exhibits THF-independent aldolase activity toward beta-hydroxyamino acids, producing glycine and aldehydes, via a retro-aldol mechanism. The polypeptide is Serine hydroxymethyltransferase (Haloquadratum walsbyi (strain DSM 16790 / HBSQ001)).